A 445-amino-acid polypeptide reads, in one-letter code: Proton extrusion protein PxcA (445 aa).

4 consecutive transmembrane segments (helical) span residues 227-247, 322-342, 369-389, and 405-425; these read FILL…TFLI, AIAN…VVAF, LIIL…WEVI, and FNFL…KYWI.

The protein belongs to the CemA family.

The protein localises to the cell inner membrane. Its function is as follows. Required for H(+) efflux immediately after light irradiation to form a rapid H(+) concentration gradient across the thylakoid membranes. Together with PxcL, contributes to transient H(+) uptake following dark to light transition. This is Proton extrusion protein PxcA from Microcystis aeruginosa (strain NIES-843 / IAM M-2473).